The sequence spans 280 residues: Golgi to ER traffic protein 2 (280 aa).

Over 1–149 (MPSDREKQRI…IAYNLYQQRK (149 aa)) the chain is Cytoplasmic. The segment at 15-59 (RQAKMAKGGASDRLNKILSQGSSVKTSAVSVLDQPQPADHDPEGM) is disordered. Residues 31–43 (ILSQGSSVKTSAV) show a composition bias toward polar residues. Residues 150-170 (VRHRFLVVRMVSILANFVYHF) form a helical membrane-spanning segment. At 171 to 197 (LTISDFSFSPSANPFIRSIPPTSSVSS) the chain is on the lumenal side. The helical transmembrane segment at 198–217 (FFQIFVAIEAVLVAAYIAAS) threads the bilayer. The Cytoplasmic portion of the chain corresponds to 218–257 (RNVPSNNNGLLVKGISMAAMFVPKLQRFQPLIMKIIGCWD). A helical transmembrane segment spans residues 258-278 (TVTFVLNDLGLVVLLFGLISF). Residues 279–280 (RR) lie on the Lumenal side of the membrane.

The protein belongs to the GET2 family. In terms of assembly, component of the Golgi to ER traffic (GET) complex, which is composed of GET1, GET2 and GET3. Within the complex, GET1 and GET2 form a heterotetramer which is stabilized by phosphatidylinositol binding and which binds to the GET3 homodimer.

It is found in the endoplasmic reticulum membrane. The protein resides in the golgi apparatus membrane. In terms of biological role, required for the post-translational delivery of tail-anchored (TA) proteins to the endoplasmic reticulum. Together with GET1, acts as a membrane receptor for soluble GET3, which recognizes and selectively binds the transmembrane domain of TA proteins in the cytosol. The GET complex cooperates with the HDEL receptor ERD2 to mediate the ATP-dependent retrieval of resident ER proteins that contain a C-terminal H-D-E-L retention signal from the Golgi to the ER. The protein is Golgi to ER traffic protein 2 of Meyerozyma guilliermondii (strain ATCC 6260 / CBS 566 / DSM 6381 / JCM 1539 / NBRC 10279 / NRRL Y-324) (Yeast).